A 196-amino-acid polypeptide reads, in one-letter code: uncharacterized protein (196 aa).

This is an uncharacterized protein from Mycoplasma genitalium (strain ATCC 33530 / DSM 19775 / NCTC 10195 / G37) (Mycoplasmoides genitalium).